The primary structure comprises 327 residues: D-alanine--D-alanine ligase (327 aa).

The ATP-grasp domain occupies 113–312; the sequence is KRLWMTHDLS…YEDFVMQVVA (200 aa). 139–194 is a binding site for ATP; it reads VADLGLPLIVKPAREGSSIGLSKVTDASQMREAFEKAAALDNDVIAETFIDGAELT. Mg(2+) contacts are provided by aspartate 266, glutamate 279, and asparagine 281.

It belongs to the D-alanine--D-alanine ligase family. Mg(2+) serves as cofactor. It depends on Mn(2+) as a cofactor.

Its subcellular location is the cytoplasm. It carries out the reaction 2 D-alanine + ATP = D-alanyl-D-alanine + ADP + phosphate + H(+). Its pathway is cell wall biogenesis; peptidoglycan biosynthesis. Functionally, cell wall formation. The chain is D-alanine--D-alanine ligase from Cupriavidus pinatubonensis (strain JMP 134 / LMG 1197) (Cupriavidus necator (strain JMP 134)).